The chain runs to 935 residues: Progesterone receptor (935 aa).

The segment at 1-49 (MTELKAKGXRAPHVAGSPSSPKVXSPLPCRQAAXPFPGSQTSDTLPEVS) is disordered. Positions 1–164 (MTELKAKGXR…SATQRVLSRL (164 aa)) are AF3; mediates transcriptional activation. Positions 1 to 568 (MTELKAKGXR…YSFESLPQKI (568 aa)) are modulating, Pro-Rich. A compositionally biased stretch (low complexity) spans 17–28 (SPSSPKVXSPLP). Position 20 is a phosphoserine (Ser20). The short motif at 55–59 (LDGLL) is the LXXL motif 1 element. The tract at residues 61-255 (PRICQGQDPP…GAAAGGGAAA (195 aa)) is disordered. Phosphoserine is present on Ser81. The LXXL motif 2 motif lies at 115–119 (LDTLW). 2 positions are modified to phosphoserine: Ser130 and Ser162. The segment at 165 to 305 (MSRSGGKAGD…LATTVTDFIH (141 aa)) is mediates transcriptional transrepression. The Nuclear localization signal motif lies at 183-187 (KVLPR). Residue Ser190 is modified to Phosphoserine. A compositionally biased stretch (polar residues) spans 191-203 (PSRQLLLPTTGSP). Ser213 is modified (phosphoserine). Residues 220 to 231 (EVEEEDGSESED) show a composition bias toward acidic residues. Residues 232-246 (SAGPLLKGKPRALGG) are compositionally biased toward low complexity. Ser294 carries the post-translational modification Phosphoserine; by MAPK1. Residues 331 to 365 (GGAGAASAFAPPRSSPSASSTPVPGGDFPDCAYAP) form a disordered region. Residues 335–356 (AASAFAPPRSSPSASSTPVPGG) show a composition bias toward low complexity. Ser345 carries the phosphoserine; by MAPK modification. Lys388 participates in a covalent cross-link: Glycyl lysine isopeptide (Lys-Gly) (interchain with G-Cter in SUMO); alternate. Lys388 is covalently cross-linked (Glycyl lysine isopeptide (Lys-Gly) (interchain with G-Cter in ubiquitin); alternate). The residue at position 400 (Ser400) is a Phosphoserine; by CDK2. The disordered stretch occupies residues 415 to 452 (PDFPLGPPPPLPPRAPPSRPGEAAVTAAPASASVSSAS). The segment covering 418-433 (PLGPPPPLPPRAPPSR) has biased composition (pro residues). Residues 434–452 (PGEAAVTAAPASASVSSAS) show a composition bias toward low complexity. Positions 456-548 (STLECILYKA…VYPPYLNYLR (93 aa)) are AF1; mediates transcriptional activation. A Glycyl lysine isopeptide (Lys-Gly) (interchain with G-Cter in SUMO) cross-link involves residue Lys533. 2 consecutive NR C4-type zinc fingers follow at residues 569 to 589 (CLIC…CGSC) and 605 to 629 (CAGR…LRKC). A DNA-binding region (nuclear receptor) is located at residues 569–641 (CLICGDEASG…AGMVLGGRKF (73 aa)). The residue at position 678 (Ser678) is a Phosphoserine. The NR LBD domain maps to 681–915 (QDIQLIPPLI…EFPEMMSEVI (235 aa)). The interval 689–935 (LINLLLSIEP…MVKPLLFHKK (247 aa)) is AF2; mediates transcriptional activation.

This sequence belongs to the nuclear hormone receptor family. In terms of assembly, interacts with SMARD1 and UNC45A. Interacts with CUEDC2; the interaction promotes ubiquitination, decreases sumoylation, and represses transcriptional activity. Interacts with PIAS3; the interaction promotes sumoylation of PR in a hormone-dependent manner, inhibits DNA-binding, and alters nuclear export. Interacts with SP1; the interaction requires ligand-induced phosphorylation on Ser-345 by ERK1/2-MAPK. Interacts with PRMT2. Interacts with NCOA2 and NCOA1. Interacts with KLF9. Interacts with GTF2B. In terms of processing, phosphorylated on multiple serine sites. Several of these sites are hormone-dependent. Phosphorylation on Ser-294 is highly hormone-dependent and modulates ubiquitination and sumoylation on Lys-388. Phosphorylation on Ser-345 also requires induction by hormone. Basal phosphorylation on Ser-81, Ser-162, Ser-190 and Ser-400 is increased in response to progesterone and can be phosphorylated in vitro by the CDK2-A1 complex. Increased levels of phosphorylation on Ser-400 also in the presence of EGF, heregulin, IGF, PMA and FBS. Phosphorylation at this site by CDK2 is ligand-independent, and increases nuclear translocation and transcriptional activity. Phosphorylation at Ser-162 and Ser-294, but not at Ser-190, is impaired during the G(2)/M phase of the cell cycle. Phosphorylation on Ser-345 by ERK1/2 MAPK is required for interaction with SP1. Sumoylation is hormone-dependent and represses transcriptional activity. Sumoylation on all three sites is enhanced by PIAS3. Desumoylated by SENP1. Sumoylation on Lys-388, the main site of sumoylation, is repressed by ubiquitination on the same site, and modulated by phosphorylation at Ser-294. Post-translationally, ubiquitination is hormone-dependent and represses sumoylation on the same site. Promoted by MAPK-mediated phosphorylation on Ser-294. In terms of processing, palmitoylated by ZDHHC7 and ZDHHC21. Palmitoylation is required for plasma membrane targeting and for rapid intracellular signaling via ERK and AKT kinases and cAMP generation.

Its subcellular location is the nucleus. It is found in the cytoplasm. The steroid hormones and their receptors are involved in the regulation of eukaryotic gene expression and affect cellular proliferation and differentiation in target tissues. Transcriptional activator of several progesteron-dependent promoters in a variety of cell types. Involved in activation of SRC-dependent MAPK signaling on hormone stimulation. This is Progesterone receptor (PGR) from Ateles paniscus (Black spider monkey).